The chain runs to 367 residues: Peptide chain release factor 2 (367 aa).

The residue at position 251 (glutamine 251) is an N5-methylglutamine.

It belongs to the prokaryotic/mitochondrial release factor family. Methylated by PrmC. Methylation increases the termination efficiency of RF2.

It localises to the cytoplasm. Peptide chain release factor 2 directs the termination of translation in response to the peptide chain termination codons UGA and UAA. The chain is Peptide chain release factor 2 from Nautilia profundicola (strain ATCC BAA-1463 / DSM 18972 / AmH).